A 1205-amino-acid polypeptide reads, in one-letter code: U2 snRNP component prp10 (1205 aa).

3 disordered regions span residues 39–58 (QKEA…EGTQ), 122–175 (YADE…GRSY), and 202–254 (GTLK…RRSR). The span at 44–58 (KNSSTNGSVNIEGTQ) shows a compositional bias: polar residues. Over residues 130–153 (MQERQSKKQIQDRESDYQKQRYDR) the composition is skewed to basic and acidic residues. HEAT repeat units lie at residues 393–429 (LRER…DFGA), 431–473 (ALFN…PFTH), 475–505 (ILVV…AKAS), 506–540 (GLAH…ASAL), 541–578 (GVPA…LLGC), 582–619 (PHLK…AATP), 665–702 (HFTR…TDGV), 745–782 (VGSR…SLGV), 828–865 (PYLP…VLKA), 912–949 (PPIR…RGSE), 954–991 (REWM…AIGP), 993–1024 (DVLA…AETC), 1025–1061 (MPFT…YIGE), 1065–1102 (DYVY…GCVG), 1107–1142 (DAMI…RNCI), and 1143–1179 (GVGP…QSAD).

Belongs to the SF3B1 family. Belongs to the 40S cdc5-associated complex (or cwf complex), a spliceosome sub-complex reminiscent of a late-stage spliceosome composed of the U2, U5 and U6 snRNAs and at least brr2, cdc5, cwf2/prp3, cwf3/syf1, cwf4/syf3, cwf5/ecm2, spp42/cwf6, cwf7/spf27, cwf8, cwf9, cwf10, cwf11, cwf12, prp45/cwf13, cwf14, cwf15, cwf16, cwf17, cwf18, cwf19, cwf20, cwf21, cwf22, cwf23, cwf24, cwf25, cwf26, cyp7/cwf27, cwf28, cwf29/ist3, lea1, msl1, prp5/cwf1, prp10, prp12/sap130, prp17, prp22, sap61, sap62, sap114, sap145, slu7, smb1, smd1, smd3, smf1, smg1 and syf2.

Its subcellular location is the nucleus. Contacts pre-mRNA on both sides of the branch site early in spliceosome assembly. The chain is U2 snRNP component prp10 (prp10) from Schizosaccharomyces pombe (strain 972 / ATCC 24843) (Fission yeast).